The chain runs to 249 residues: AA9 family lytic polysaccharide monooxygenase cel61B (249 aa).

Positions 1–19 are cleaved as a signal peptide; that stretch reads MKSCAILAALGCLAGSVLG. H20 lines the Cu(2+) pocket. An N-linked (GlcNAc...) asparagine glycan is attached at N25. Disulfide bonds link C78–C198 and C120–C124. H108 provides a ligand contact to Cu(2+). Residues H184 and Q193 each contribute to the O2 site. Y195 contributes to the Cu(2+) binding site.

It belongs to the polysaccharide monooxygenase AA9 family. In terms of assembly, monomer. Cu(2+) is required as a cofactor.

The protein localises to the secreted. It carries out the reaction [(1-&gt;4)-beta-D-glucosyl]n+m + reduced acceptor + O2 = 4-dehydro-beta-D-glucosyl-[(1-&gt;4)-beta-D-glucosyl]n-1 + [(1-&gt;4)-beta-D-glucosyl]m + acceptor + H2O.. Its function is as follows. Lytic polysaccharide monooxygenase (LPMO) that depolymerizes crystalline and amorphous polysaccharides via the oxidation of scissile alpha- or beta-(1-4)-glycosidic bonds, yielding C1 or C4 oxidation products. Catalysis by LPMOs requires the reduction of the active-site copper from Cu(II) to Cu(I) by a reducing agent and H(2)O(2) or O(2) as a cosubstrate. The protein is AA9 family lytic polysaccharide monooxygenase cel61B of Hypocrea jecorina (strain QM6a) (Trichoderma reesei).